The chain runs to 262 residues: Global transcriptional regulator CodY (262 aa).

Positions 1–159 (MATLLEKTRK…ATTVIGVQLS (159 aa)) are GAF domain. Residues 207–226 (ASVIADKIGITRSVIVNALR) constitute a DNA-binding region (H-T-H motif).

This sequence belongs to the CodY family.

It localises to the cytoplasm. Its function is as follows. DNA-binding global transcriptional regulator which is involved in the adaptive response to starvation and acts by directly or indirectly controlling the expression of numerous genes in response to nutrient availability. During rapid exponential growth, CodY is highly active and represses genes whose products allow adaptation to nutrient depletion. This chain is Global transcriptional regulator CodY, found in Lactococcus lactis subsp. lactis (strain IL1403) (Streptococcus lactis).